The primary structure comprises 547 residues: MAKRIIYNEQARRALEKGIDILTESVAVTLGPKGRNVVLEKKFGAPQIINDGVTIAKEIELEDHIENTGVSLIRQAASKTNDAAGDGTTTATVLAHAMVKAGLRNVAAGANAISLKRGIDQAAVFLVSKIEENAKPITDNNSIAQVGAISAGNDDEVGKMIADAMEKVGKEGVISLEEGKSMTTELEVTEGMRFDKGYISPYFATDTDRMEAVLEEPYILLTDKKIGLVQDLVPVLEAIARTGKPLLIIAEDIEKEALATLVVNRLRGVLNVAAVKAPGFGDRRKAMLEDMAVLTAGQLITEDAGLKIENAKIEMLGTARRITINKDTTTIVAEGNEVAVKARCEQIRKQMDETESTYDKEKLQERLAKLAGGVAVVKVGAATETEMKDKKLRLEDAINATKAAVEEGIVPGGGTTLAHLAPALTEWANQNLSGEELIGANIVAQALDAPLKRIAENAGANGSVVAENVRHKPFSEGFNAASNEYVDMLAAGIIDPAKVTRSGLQNAASIAGMVLTTECIVVDLPEKKEAAPAGGGMGGGMGGDFDY.

Residues 29–32, 86–90, Gly413, 479–481, and Asp495 each bind ATP; these read TLGP, DGTTT, and NAA.

Belongs to the chaperonin (HSP60) family. Forms a cylinder of 14 subunits composed of two heptameric rings stacked back-to-back. Interacts with the co-chaperonin GroES.

The protein localises to the cytoplasm. It catalyses the reaction ATP + H2O + a folded polypeptide = ADP + phosphate + an unfolded polypeptide.. Its function is as follows. Together with its co-chaperonin GroES, plays an essential role in assisting protein folding. The GroEL-GroES system forms a nano-cage that allows encapsulation of the non-native substrate proteins and provides a physical environment optimized to promote and accelerate protein folding. This is Chaperonin GroEL from Synechococcus sp. (strain RCC307).